The chain runs to 155 residues: Small ribosomal subunit protein uS7 (155 aa).

It belongs to the universal ribosomal protein uS7 family. Part of the 30S ribosomal subunit. Contacts proteins S9 and S11.

Functionally, one of the primary rRNA binding proteins, it binds directly to 16S rRNA where it nucleates assembly of the head domain of the 30S subunit. Is located at the subunit interface close to the decoding center, probably blocks exit of the E-site tRNA. The protein is Small ribosomal subunit protein uS7 of Sulfurovum sp. (strain NBC37-1).